Here is a 765-residue protein sequence, read N- to C-terminus: Putative ankyrin repeat protein L371 (765 aa).

ANK repeat units follow at residues 60–89 (NGNYMIFFAIIMNSSTILKKLIKYGARLDV), 93–122 (EGNSVMYYPIKFGYYEIIDVLIDYDSKIIG), 132–161 (KGSVPLFYAIKYRNKYALQQLLSKDANANY), 165–194 (DNVNALHMAVLKKDISMVKLVIKHIKNLNA), 198–227 (QGSTALHYACNFQLYDITKLLLDNGADQNI), 232–261 (LDFYPIFYSVIQNDINISKLLVDYGANPNH), 265–295 (EGNTILHYCVIYNHMEIFDYIMNNYVIRCRS), 322–353 (DGLTVVHLMLYDYKEEYDNFLKKLIPYCNLNY), and 357–395 (TGNTILHLIAENNIWNKFDNLLNVKKLNIFIRNNNGKTV).

This chain is Putative ankyrin repeat protein L371, found in Acanthamoeba polyphaga mimivirus (APMV).